Here is a 261-residue protein sequence, read N- to C-terminus: 4-hydroxy-tetrahydrodipicolinate reductase (261 aa).

NAD(+)-binding positions include 11 to 16, 96 to 98, and 122 to 125; these read GFMGAM, GTT, and APNF. His152 (proton donor/acceptor) is an active-site residue. Residue His153 participates in (S)-2,3,4,5-tetrahydrodipicolinate binding. Lys156 (proton donor) is an active-site residue. 162–163 is a (S)-2,3,4,5-tetrahydrodipicolinate binding site; that stretch reads GT.

This sequence belongs to the DapB family.

It is found in the cytoplasm. The enzyme catalyses (S)-2,3,4,5-tetrahydrodipicolinate + NAD(+) + H2O = (2S,4S)-4-hydroxy-2,3,4,5-tetrahydrodipicolinate + NADH + H(+). The catalysed reaction is (S)-2,3,4,5-tetrahydrodipicolinate + NADP(+) + H2O = (2S,4S)-4-hydroxy-2,3,4,5-tetrahydrodipicolinate + NADPH + H(+). It participates in amino-acid biosynthesis; L-lysine biosynthesis via DAP pathway; (S)-tetrahydrodipicolinate from L-aspartate: step 4/4. Catalyzes the conversion of 4-hydroxy-tetrahydrodipicolinate (HTPA) to tetrahydrodipicolinate. This Lactobacillus helveticus (strain DPC 4571) protein is 4-hydroxy-tetrahydrodipicolinate reductase.